The chain runs to 445 residues: ATP-dependent protease ATPase subunit HslU (445 aa).

Residues V18, 60–65, D254, E319, and R391 each bind ATP; that span reads GVGKTE.

The protein belongs to the ClpX chaperone family. HslU subfamily. As to quaternary structure, a double ring-shaped homohexamer of HslV is capped on each side by a ring-shaped HslU homohexamer. The assembly of the HslU/HslV complex is dependent on binding of ATP.

Its subcellular location is the cytoplasm. Its function is as follows. ATPase subunit of a proteasome-like degradation complex; this subunit has chaperone activity. The binding of ATP and its subsequent hydrolysis by HslU are essential for unfolding of protein substrates subsequently hydrolyzed by HslV. HslU recognizes the N-terminal part of its protein substrates and unfolds these before they are guided to HslV for hydrolysis. In Alcanivorax borkumensis (strain ATCC 700651 / DSM 11573 / NCIMB 13689 / SK2), this protein is ATP-dependent protease ATPase subunit HslU.